We begin with the raw amino-acid sequence, 1190 residues long: Serine/threonine-protein kinase N (1190 aa).

REM-1 domains lie at 28 to 102, 142 to 219, and 242 to 322; these read NLPE…QILL, ALEG…NREQ, and SSQP…ELPA. One can recognise a C2 domain in the interval 359–515; it reads LGGKPYQSVS…MALQLEPQGL (157 aa). The span at 395–404 shows a compositional bias: basic and acidic residues; it reads PGRSRRDKDN. Disordered regions lie at residues 395–415, 572–715, 757–787, and 811–832; these read PGRS…RSFV, HVHM…PPPP, PATP…QPPQ, and SPSS…RNVA. Composition is skewed to low complexity over residues 576–588 and 767–787; these read GSAG…TGSS and AAAG…QPPQ. The region spanning 863–1122 is the Protein kinase domain; it reads FRLLSVLGRG…AEDVKKQAFF (260 aa). Residues 869–877 and lysine 892 contribute to the ATP site; that span reads LGRGHFGKV. Aspartate 988 serves as the catalytic Proton acceptor. Positions 1123-1190 constitute an AGC-kinase C-terminal domain; it reads RSIVWDDLLL…QDFSYTAEWC (68 aa).

Belongs to the protein kinase superfamily. Ser/Thr protein kinase family. As to quaternary structure, interacts (via N-terminus) with Rho1 (via REM repeats), Rac1 (via REM 1 repeat) and Rac2. Phosphorylated. Autophosphorylated; autophosphorylation is stimulated by GTP-bound Rho/Rac GTPases.

The protein resides in the cytoplasm. It localises to the nucleus. Its subcellular location is the membrane. It is found in the cell projection. The protein localises to the lamellipodium. The protein resides in the cytoskeleton. It localises to the cleavage furrow. Its subcellular location is the midbody. It is found in the cell junction. It carries out the reaction L-seryl-[protein] + ATP = O-phospho-L-seryl-[protein] + ADP + H(+). The catalysed reaction is L-threonyl-[protein] + ATP = O-phospho-L-threonyl-[protein] + ADP + H(+). Activated by lipids, particularly cardiolipin and to a lesser extent by other acidic phospholipids and unsaturated fatty acids. Two specific sites, Thr-1022 (activation loop of the kinase domain) and Thr-1164 (turn motif), may be needed to be phosphorylated for its full activation. Kinase activity is activated upon binding to GTP-bound Rho/Rac GTPases. In terms of biological role, pkc-related serine/threonine-protein kinase and Rho/Rac effector protein that participates in specific signal transduction responses in the cell. May play a role in the regulation of cell cycle progression, actin cytoskeleton assembly, cell migration, cell adhesion and transcription activation signaling processes. Plays a role in regulating Rho-mediated dorsal closure during embryogenesis. This is Serine/threonine-protein kinase N (Pkn) from Drosophila melanogaster (Fruit fly).